Reading from the N-terminus, the 198-residue chain is HTH-type transcriptional regulator BetI (198 aa).

The HTH tetR-type domain occupies Pro8 to Leu68. Positions Thr31–Phe50 form a DNA-binding region, H-T-H motif.

Its pathway is amine and polyamine biosynthesis; betaine biosynthesis via choline pathway [regulation]. Its function is as follows. Repressor involved in the biosynthesis of the osmoprotectant glycine betaine. It represses transcription of the choline transporter BetT and the genes of BetAB involved in the synthesis of glycine betaine. This Brucella suis (strain ATCC 23445 / NCTC 10510) protein is HTH-type transcriptional regulator BetI.